The primary structure comprises 270 residues: Glucosamine-6-phosphate deaminase (270 aa).

Asp-72 serves as the catalytic Proton acceptor; for enolization step. Asp-141 acts as the For ring-opening step in catalysis. Residue His-143 is the Proton acceptor; for ring-opening step of the active site. The active-site For ring-opening step is the Glu-148.

This sequence belongs to the glucosamine/galactosamine-6-phosphate isomerase family. NagB subfamily. In terms of assembly, homohexamer.

The catalysed reaction is alpha-D-glucosamine 6-phosphate + H2O = beta-D-fructose 6-phosphate + NH4(+). It participates in amino-sugar metabolism; N-acetylneuraminate degradation; D-fructose 6-phosphate from N-acetylneuraminate: step 5/5. Allosterically activated by N-acetylglucosamine 6-phosphate (GlcNAc6P). In terms of biological role, catalyzes the reversible isomerization-deamination of glucosamine 6-phosphate (GlcN6P) to form fructose 6-phosphate (Fru6P) and ammonium ion. This chain is Glucosamine-6-phosphate deaminase, found in Haemophilus influenzae (strain PittEE).